Reading from the N-terminus, the 193-residue chain is Large ribosomal subunit protein uL18 (193 aa).

It belongs to the universal ribosomal protein uL18 family. In terms of assembly, part of the 50S ribosomal subunit. Contacts the 5S and 23S rRNAs.

In terms of biological role, this is one of the proteins that bind and probably mediate the attachment of the 5S RNA into the large ribosomal subunit, where it forms part of the central protuberance. This chain is Large ribosomal subunit protein uL18, found in Methanobrevibacter smithii (strain ATCC 35061 / DSM 861 / OCM 144 / PS).